The sequence spans 490 residues: Cysteine--tRNA ligase (490 aa).

C43 contacts Zn(2+). The 'HIGH' region motif lies at 45–55 (MTVQSSPHLGH). The tract at residues 177–204 (VDEMSPAEDSDPRGKRDPRDFALWKGHK) is disordered. Residues 186–204 (SDPRGKRDPRDFALWKGHK) show a composition bias toward basic and acidic residues. C228, H253, and E257 together coordinate Zn(2+). Residues 284-288 (KMSKS) carry the 'KMSKS' region motif. K287 contacts ATP.

The protein belongs to the class-I aminoacyl-tRNA synthetase family. Monomer. Zn(2+) serves as cofactor.

Its subcellular location is the cytoplasm. It carries out the reaction tRNA(Cys) + L-cysteine + ATP = L-cysteinyl-tRNA(Cys) + AMP + diphosphate. This is Cysteine--tRNA ligase from Cutibacterium acnes (strain DSM 16379 / KPA171202) (Propionibacterium acnes).